A 159-amino-acid polypeptide reads, in one-letter code: 2-C-methyl-D-erythritol 2,4-cyclodiphosphate synthase (159 aa).

A divalent metal cation contacts are provided by Asp-10 and His-12. 4-CDP-2-C-methyl-D-erythritol 2-phosphate contacts are provided by residues 10 to 12 (DVH) and 36 to 37 (HS). Position 44 (His-44) interacts with a divalent metal cation. 4-CDP-2-C-methyl-D-erythritol 2-phosphate is bound by residues 58 to 60 (DIG), 63 to 67 (FPDTD), 102 to 108 (AQAPKMA), 134 to 137 (TTTE), Phe-141, and Arg-144.

This sequence belongs to the IspF family. In terms of assembly, homotrimer. A divalent metal cation is required as a cofactor.

The enzyme catalyses 4-CDP-2-C-methyl-D-erythritol 2-phosphate = 2-C-methyl-D-erythritol 2,4-cyclic diphosphate + CMP. It functions in the pathway isoprenoid biosynthesis; isopentenyl diphosphate biosynthesis via DXP pathway; isopentenyl diphosphate from 1-deoxy-D-xylulose 5-phosphate: step 4/6. Its function is as follows. Involved in the biosynthesis of isopentenyl diphosphate (IPP) and dimethylallyl diphosphate (DMAPP), two major building blocks of isoprenoid compounds. Catalyzes the conversion of 4-diphosphocytidyl-2-C-methyl-D-erythritol 2-phosphate (CDP-ME2P) to 2-C-methyl-D-erythritol 2,4-cyclodiphosphate (ME-CPP) with a corresponding release of cytidine 5-monophosphate (CMP). The polypeptide is 2-C-methyl-D-erythritol 2,4-cyclodiphosphate synthase (Idiomarina loihiensis (strain ATCC BAA-735 / DSM 15497 / L2-TR)).